Reading from the N-terminus, the 417-residue chain is Magnesium-protoporphyrin IX monomethyl ester [oxidative] cyclase, chloroplastic (417 aa).

A chloroplast-targeting transit peptide spans 1-45 (MASAMELSLLNPAMHHYGIAAKTASHLPVVPARRASSGAVRFRVR).

It belongs to the AcsF family. Fe cation serves as cofactor.

The protein localises to the plastid. It is found in the chloroplast membrane. The enzyme catalyses Mg-protoporphyrin IX 13-monomethyl ester + 3 NADPH + 3 O2 + 2 H(+) = 3,8-divinyl protochlorophyllide a + 3 NADP(+) + 5 H2O. Its pathway is porphyrin-containing compound metabolism; chlorophyll biosynthesis. In terms of biological role, catalyzes the formation of the isocyclic ring in chlorophyll biosynthesis. Mediates the cyclase reaction, which results in the formation of divinylprotochlorophyllide (Pchlide) characteristic of all chlorophylls from magnesium-protoporphyrin IX 13-monomethyl ester (MgPMME). This Hordeum vulgare (Barley) protein is Magnesium-protoporphyrin IX monomethyl ester [oxidative] cyclase, chloroplastic (CRD1).